The chain runs to 63 residues: Large ribosomal subunit protein uL29 (63 aa).

This sequence belongs to the universal ribosomal protein uL29 family.

In Photobacterium profundum (strain SS9), this protein is Large ribosomal subunit protein uL29.